A 226-amino-acid polypeptide reads, in one-letter code: Peroxiredoxin-like 2C (226 aa).

This sequence belongs to the peroxiredoxin-like PRXL2 family. PRXL2C subfamily. As to expression, expressed in gastric tissues.

In terms of biological role, may positively regulate ERK1/2 signaling and AKT1 activation leading to HIF1A up-regulation with an increased expression of glycolysis genes and enhanced glycolysis. The polypeptide is Peroxiredoxin-like 2C (Homo sapiens (Human)).